Here is a 272-residue protein sequence, read N- to C-terminus: HMP-PP phosphatase (272 aa).

Aspartate 8 functions as the Nucleophile in the catalytic mechanism. Positions 8, 10, and 212 each coordinate Mg(2+).

It belongs to the HAD-like hydrolase superfamily. Cof family. It depends on Mg(2+) as a cofactor.

The enzyme catalyses 4-amino-2-methyl-5-(diphosphooxymethyl)pyrimidine + H2O = 4-amino-2-methyl-5-(phosphooxymethyl)pyrimidine + phosphate + H(+). Functionally, catalyzes the hydrolysis of 4-amino-2-methyl-5-hydroxymethylpyrimidine pyrophosphate (HMP-PP) to 4-amino-2-methyl-5-hydroxymethylpyrimidine phosphate (HMP-P). The sequence is that of HMP-PP phosphatase from Citrobacter koseri (strain ATCC BAA-895 / CDC 4225-83 / SGSC4696).